Reading from the N-terminus, the 751-residue chain is Oxysterol-binding protein-related protein 11 (751 aa).

Methionine 1 is modified (N-acetylmethionine). The disordered stretch occupies residues 1–57 (MQGGEPASVMKVSESEGKLEGLATAVTPNKNSGNSSCGGAISSSSSNSSRGGSAKGW). A Phosphoserine modification is found at serine 15. At threonine 27 the chain carries Phosphothreonine. Residues 31-52 (NSGNSSCGGAISSSSSNSSRGG) are compositionally biased toward low complexity. Positions 63–160 (MESVNGYLMK…WVSRLQICTQ (98 aa)) constitute a PH domain. Phosphoserine occurs at positions 177, 179, 182, 186, 189, and 194. 2 disordered regions span residues 475-497 (SGVSSSSSTPAITDHAPLPEEAP) and 694-716 (EIDKATEHKRSLEERQRTEERLR).

Belongs to the OSBP family. Heterodimer with OSBPL9.

It localises to the late endosome membrane. It is found in the golgi apparatus. Its subcellular location is the trans-Golgi network membrane. The enzyme catalyses a 1,2-diacyl-sn-glycero-3-phospho-(1D-myo-inositol 4-phosphate)(out) + a 1,2-diacyl-sn-glycero-3-phospho-L-serine(in) = a 1,2-diacyl-sn-glycero-3-phospho-(1D-myo-inositol 4-phosphate)(in) + a 1,2-diacyl-sn-glycero-3-phospho-L-serine(out). Functionally, plays a role in regulating ADIPOQ and FABP4 levels in differentiating adipocytes and is also involved in regulation of adipocyte triglyceride storage. Weakly binds 25-hydroxycholesterol. Interacts with OSBPL9 to function as lipid transfer proteins. Together they form a heterodimer that localizes at the ER-trans-Golgi membrane contact sites, and exchanges phosphatidylserine (1,2-diacyl-sn-glycero-3-phospho-L-serine, PS) for phosphatidylinositol-4-phosphate (1,2-diacyl-sn-glycero-3-phospho-(1D-myo-inositol 4-phosphate), PI(4)P) between the two organelles, a step that is critical for sphingomyelin synthesis in the Golgi complex. The sequence is that of Oxysterol-binding protein-related protein 11 (Osbpl11) from Mus musculus (Mouse).